A 383-amino-acid polypeptide reads, in one-letter code: 1-deoxy-D-xylulose 5-phosphate reductoisomerase (383 aa).

Residues T10, G11, S12, I13, G36, K37, N38, and N122 each contribute to the NADPH site. 1-deoxy-D-xylulose 5-phosphate is bound at residue K123. NADPH is bound at residue E124. Residue D148 participates in Mn(2+) binding. 1-deoxy-D-xylulose 5-phosphate-binding residues include S149, E150, S174, and H197. Residue E150 participates in Mn(2+) binding. G203 provides a ligand contact to NADPH. 1-deoxy-D-xylulose 5-phosphate-binding residues include S210, N215, K216, and E219. E219 provides a ligand contact to Mn(2+).

The protein belongs to the DXR family. It depends on Mg(2+) as a cofactor. Mn(2+) is required as a cofactor.

It catalyses the reaction 2-C-methyl-D-erythritol 4-phosphate + NADP(+) = 1-deoxy-D-xylulose 5-phosphate + NADPH + H(+). The protein operates within isoprenoid biosynthesis; isopentenyl diphosphate biosynthesis via DXP pathway; isopentenyl diphosphate from 1-deoxy-D-xylulose 5-phosphate: step 1/6. In terms of biological role, catalyzes the NADPH-dependent rearrangement and reduction of 1-deoxy-D-xylulose-5-phosphate (DXP) to 2-C-methyl-D-erythritol 4-phosphate (MEP). This is 1-deoxy-D-xylulose 5-phosphate reductoisomerase from Bacillus velezensis (strain DSM 23117 / BGSC 10A6 / LMG 26770 / FZB42) (Bacillus amyloliquefaciens subsp. plantarum).